We begin with the raw amino-acid sequence, 508 residues long: Photosystem II CP47 reaction center protein (508 aa).

The next 6 membrane-spanning stretches (helical) occupy residues 21–36 (SVHI…WAGS), 101–115 (IVLS…IWHW), 140–156 (GIHL…FGAF), 203–218 (IAAG…FHLS), 237–252 (VLSS…AFVV), and 457–472 (SFAL…HGAR).

Belongs to the PsbB/PsbC family. PsbB subfamily. In terms of assembly, PSII is composed of 1 copy each of membrane proteins PsbA, PsbB, PsbC, PsbD, PsbE, PsbF, PsbH, PsbI, PsbJ, PsbK, PsbL, PsbM, PsbT, PsbX, PsbY, PsbZ, Psb30/Ycf12, at least 3 peripheral proteins of the oxygen-evolving complex and a large number of cofactors. It forms dimeric complexes. Binds multiple chlorophylls. PSII binds additional chlorophylls, carotenoids and specific lipids. is required as a cofactor.

The protein resides in the plastid. Its subcellular location is the chloroplast thylakoid membrane. Functionally, one of the components of the core complex of photosystem II (PSII). It binds chlorophyll and helps catalyze the primary light-induced photochemical processes of PSII. PSII is a light-driven water:plastoquinone oxidoreductase, using light energy to abstract electrons from H(2)O, generating O(2) and a proton gradient subsequently used for ATP formation. In Pelargonium hortorum (Common geranium), this protein is Photosystem II CP47 reaction center protein.